A 924-amino-acid polypeptide reads, in one-letter code: Lipoxygenase 7, chloroplastic (924 aa).

Residues 1–61 (MLRPQLNPSS…GQGSSRVVVV (61 aa)) constitute a chloroplast transit peptide. The PLAT domain maps to 88–218 (AVATIKVTVG…VGDEGTPSKR (131 aa)). A Lipoxygenase domain is found at 225–924 (TYLPGQTPAG…GMGIPNSTSI (700 aa)). Residues 231–315 (TPAGLRSYRK…PKSETRKGNV (85 aa)) form a disordered region. 2 stretches are compositionally biased toward basic and acidic residues: residues 239-262 (RKND…RVYD) and 302-315 (SKKD…KGNV). Fe cation is bound by residues histidine 581, histidine 586, histidine 773, asparagine 777, and isoleucine 924.

The protein belongs to the lipoxygenase family. Requires Fe cation as cofactor.

It localises to the plastid. Its subcellular location is the chloroplast. It catalyses the reaction (9Z,12Z)-octadecadienoate + O2 = (13S)-hydroperoxy-(9Z,11E)-octadecadienoate. The catalysed reaction is (9Z,12Z,15Z)-octadecatrienoate + O2 = (13S)-hydroperoxy-(9Z,11E,15Z)-octadecatrienoate. Its pathway is lipid metabolism; oxylipin biosynthesis. Plant lipoxygenase may be involved in a number of diverse aspects of plant physiology including growth and development, pest resistance, and senescence or responses to wounding. This lipoxygenase introduces molecular oxygen exclusively into the C-13 position of linoleic and linolenic acids. The chain is Lipoxygenase 7, chloroplastic (CM-LOX1) from Oryza sativa subsp. japonica (Rice).